The sequence spans 194 residues: MRVFIIIIYFRCFSKDHKPYFVITMYESLKNYFFEEIKNDKLLKLPDDFYDDIREYIKNIKDDIELERVKYYFKELRKLRIYKALYLDNERENLLPEELNIIHAIENIVVELKIEETPEFKKPTEIDTPKPIYTINDIDVVKVDKNFPPFTDGTFIYDLNKNDVLSLDRKISHILEKHRIISRIGESYENPEES.

This is an uncharacterized protein from Methanocaldococcus jannaschii (strain ATCC 43067 / DSM 2661 / JAL-1 / JCM 10045 / NBRC 100440) (Methanococcus jannaschii).